We begin with the raw amino-acid sequence, 213 residues long: ATP phosphoribosyltransferase (213 aa).

This sequence belongs to the ATP phosphoribosyltransferase family. Short subfamily. As to quaternary structure, heteromultimer composed of HisG and HisZ subunits.

The protein resides in the cytoplasm. The catalysed reaction is 1-(5-phospho-beta-D-ribosyl)-ATP + diphosphate = 5-phospho-alpha-D-ribose 1-diphosphate + ATP. It participates in amino-acid biosynthesis; L-histidine biosynthesis; L-histidine from 5-phospho-alpha-D-ribose 1-diphosphate: step 1/9. Functionally, catalyzes the condensation of ATP and 5-phosphoribose 1-diphosphate to form N'-(5'-phosphoribosyl)-ATP (PR-ATP). Has a crucial role in the pathway because the rate of histidine biosynthesis seems to be controlled primarily by regulation of HisG enzymatic activity. In Nitrosococcus oceani (strain ATCC 19707 / BCRC 17464 / JCM 30415 / NCIMB 11848 / C-107), this protein is ATP phosphoribosyltransferase.